A 279-amino-acid chain; its full sequence is Borealin (279 aa).

Residues 135–152 (KTKAKVAAKKPSTARKTR) are compositionally biased toward basic residues. The segment at 135–180 (KTKAKVAAKKPSTARKTRASTANLTNTSKRTSKRGRATPSASKQIE) is disordered. Polar residues predominate over residues 153–163 (ASTANLTNTSK).

This sequence belongs to the borealin family. In terms of assembly, component of the CPC at least composed of survivin/birc5, incenp, cdca8/borealin and/or cdca9/dasra-A, and aurkb/aurora-B. Interacts with incenp (via N-terminus).

The protein localises to the nucleus. It is found in the chromosome. The protein resides in the centromere. It localises to the cytoplasm. Its subcellular location is the cytoskeleton. The protein localises to the spindle. Its function is as follows. Component of the chromosomal passenger complex (CPC), a complex that acts as a key regulator of mitosis. The CPC complex has essential functions at the centromere in ensuring correct chromosome alignment and segregation and is required for chromatin-induced microtubule stabilization and spindle assembly. Contributes to CPC function by facilitating loading of the CPC onto chromosomes. This chain is Borealin (cdca8), found in Xenopus tropicalis (Western clawed frog).